Here is a 384-residue protein sequence, read N- to C-terminus: Lipid-A-disaccharide synthase (384 aa).

This sequence belongs to the LpxB family.

It catalyses the reaction a lipid X + a UDP-2-N,3-O-bis[(3R)-3-hydroxyacyl]-alpha-D-glucosamine = a lipid A disaccharide + UDP + H(+). It participates in bacterial outer membrane biogenesis; LPS lipid A biosynthesis. Condensation of UDP-2,3-diacylglucosamine and 2,3-diacylglucosamine-1-phosphate to form lipid A disaccharide, a precursor of lipid A, a phosphorylated glycolipid that anchors the lipopolysaccharide to the outer membrane of the cell. This chain is Lipid-A-disaccharide synthase, found in Neisseria meningitidis serogroup C / serotype 2a (strain ATCC 700532 / DSM 15464 / FAM18).